Here is a 451-residue protein sequence, read N- to C-terminus: Probable glycine dehydrogenase (decarboxylating) subunit 1 (451 aa).

Belongs to the GcvP family. N-terminal subunit subfamily. The glycine cleavage system is composed of four proteins: P, T, L and H. In this organism, the P 'protein' is a heterodimer of two subunits.

It carries out the reaction N(6)-[(R)-lipoyl]-L-lysyl-[glycine-cleavage complex H protein] + glycine + H(+) = N(6)-[(R)-S(8)-aminomethyldihydrolipoyl]-L-lysyl-[glycine-cleavage complex H protein] + CO2. Functionally, the glycine cleavage system catalyzes the degradation of glycine. The P protein binds the alpha-amino group of glycine through its pyridoxal phosphate cofactor; CO(2) is released and the remaining methylamine moiety is then transferred to the lipoamide cofactor of the H protein. The sequence is that of Probable glycine dehydrogenase (decarboxylating) subunit 1 from Staphylococcus aureus (strain MSSA476).